Here is a 317-residue protein sequence, read N- to C-terminus: Glutathione synthetase (317 aa).

In terms of domain architecture, ATP-grasp spans 125-311 (EKMFATLFPQ…IGGKLMDAID (187 aa)). 152-208 (TAKHADVILKPLDGMGGTSIFRHRAGDPNLSVILETLTALGTQQIMAQAYLPAIKDG) serves as a coordination point for ATP. Positions 282 and 284 each coordinate Mg(2+).

Belongs to the prokaryotic GSH synthase family. Mg(2+) serves as cofactor. Mn(2+) is required as a cofactor.

The catalysed reaction is gamma-L-glutamyl-L-cysteine + glycine + ATP = glutathione + ADP + phosphate + H(+). It functions in the pathway sulfur metabolism; glutathione biosynthesis; glutathione from L-cysteine and L-glutamate: step 2/2. This Pseudomonas putida (strain ATCC 47054 / DSM 6125 / CFBP 8728 / NCIMB 11950 / KT2440) protein is Glutathione synthetase.